Here is a 140-residue protein sequence, read N- to C-terminus: Transmembrane protein 107 (140 aa).

2 helical membrane-spanning segments follow: residues Leu-7 to Trp-27 and Leu-53 to Ser-73. The N-linked (GlcNAc...) asparagine glycan is linked to Asn-79. Transmembrane regions (helical) follow at residues Ser-83–Glu-103 and Ile-113–Phe-133.

In terms of assembly, part of the tectonic-like complex (also named B9 complex). Interacts with TMEM237, TMEM231, MKS1 and TMEM216.

It localises to the membrane. It is found in the cell projection. The protein localises to the cilium. In terms of biological role, plays a role in cilia formation and embryonic patterning. Requires for normal Sonic hedgehog (Shh) signaling in the neural tube and acts in combination with GLI2 and GLI3 to pattern ventral and intermediate neuronal cell types. During ciliogenesis regulates the ciliary transition zone localization of some MKS complex proteins. This Mus musculus (Mouse) protein is Transmembrane protein 107.